Here is a 376-residue protein sequence, read N- to C-terminus: MTETPQRTRPLRVLAAMSGGVDSAVAAARAAEAGHDVTGVHLALSANPQSFRTGARGCCTIEDSRDARRAADVIGIPFYVWDLADRFREDVVEDFVAEYEAGRTPNPCLRCNEKIKFAALLDKALALGFDAVCTGHYAQVILREDGVRELHRASDMAKDQSYVLGVLDDRQLAHAMFPLGDTVTTKDEIRAEAERRGLAVAKKPDSHDICFIADGNTQGFLADRLGKAEGDIVDEAGNRLGTHEGAYGYTIGQRKGLRIGTPAPDGKPRYVLDISPVNNTVTVGPAEALDVDALRAIKPRWCGAAPTGPGTYTAQLRAHGGETEVRAELVDGTLEVTFSEPVRGVAPGQAIVLYDGTRVVGSATIASTTRATAGAA.

ATP-binding positions include 16 to 23 (AMSGGVDS) and Leu42. The Nucleophile role is filled by Cys111. The cysteines at positions 111 and 210 are disulfide-linked. Position 135 (Gly135) interacts with ATP. Positions 158–160 (KDQ) are interaction with tRNA. Catalysis depends on Cys210, which acts as the Cysteine persulfide intermediate.

The protein belongs to the MnmA/TRMU family.

The protein resides in the cytoplasm. It carries out the reaction S-sulfanyl-L-cysteinyl-[protein] + uridine(34) in tRNA + AH2 + ATP = 2-thiouridine(34) in tRNA + L-cysteinyl-[protein] + A + AMP + diphosphate + H(+). Functionally, catalyzes the 2-thiolation of uridine at the wobble position (U34) of tRNA, leading to the formation of s(2)U34. This Streptomyces coelicolor (strain ATCC BAA-471 / A3(2) / M145) protein is tRNA-specific 2-thiouridylase MnmA.